A 408-amino-acid chain; its full sequence is uncharacterized protein (408 aa).

A run of 12 helical transmembrane segments spans residues tryptophan 9–phenylalanine 29, valine 49–isoleucine 69, isoleucine 77–asparagine 97, valine 100–threonine 120, leucine 135–tryptophan 155, threonine 167–methionine 187, leucine 216–alanine 236, glycine 252–serine 272, serine 283–isoleucine 303, leucine 308–threonine 328, leucine 340–valine 360, and tyrosine 373–valine 393.

It belongs to the major facilitator superfamily.

Its subcellular location is the cell membrane. This is an uncharacterized protein from Bacillus subtilis (strain 168).